Consider the following 432-residue polypeptide: Transcriptional adapter 3 (432 aa).

K21 is covalently cross-linked (Glycyl lysine isopeptide (Lys-Gly) (interchain with G-Cter in SUMO2)). Positions 40–69 form a coiled coil; sequence IEELDTLQLELETLLSSASRRLRVLEAETQ. The interval 87–127 is disordered; the sequence is GRDHELGAPPKHGKPKKQKLEGKAGHGPGPGPGRPKSKNLQ. K129 is covalently cross-linked (Glycyl lysine isopeptide (Lys-Gly) (interchain with G-Cter in SUMO2)). 2 stretches are compositionally biased toward basic and acidic residues: residues 211–223 and 232–251; these read DGARAAAVADKKK and LDTKDVDALPKKSEAQHEQP. Disordered stretches follow at residues 211–257 and 271–319; these read DGAR…GCPF and ENII…SRIK. A phosphoserine mark is found at S280 and S298. Polar residues predominate over residues 295-305; that stretch reads ASTSPRNQNKP. Residues 367 to 407 adopt a coiled-coil conformation; sequence LLRLAKEEVSRQELRQRVRMADNEVMDAFRKIMAARQKKRT. At K418 the chain carries N6-acetyllysine.

Belongs to the NGG1 family. In terms of assembly, the PCAF complex is composed of a number of TBP-associated factors (TAFS), such as TAF5, TAF5L, TAF6, TAF6L, TAF9, TAF10 and TAF12, PCAF, and also PCAF-associated factors (PAFs), such as TADA2L/ADA2, TADA3L/ADA3 and SPT3. Interacts directly with TADA2L and PCAF and also with the high-risk HPV oncoprotein E6. Component of the STAGA transcription coactivator-HAT complex, at least composed of SUPT3H, GCN5L2, TAF5L, TAF6L, SUPT7L, TADA3L, TAD1L, TAF10, TAF12, TRRAP and TAF9. Component of the TFTC-HAT complex. Component of the ADA2A-containing complex (ATAC), composed of KAT14, KAT2A, TADA2L, TADA3L, ZZ3, MBIP, WDR5, YEATS2, CCDC101 and DR1.

It is found in the nucleus. Functions as a component of the PCAF complex. The PCAF complex is capable of efficiently acetylating histones in a nucleosomal context. The PCAF complex could be considered as the human version of the yeast SAGA complex. Also known as a coactivator for p53/TP53-dependent transcriptional activation. Component of the ATAC complex, a complex with histone acetyltransferase activity on histones H3 and H4. The polypeptide is Transcriptional adapter 3 (TADA3) (Pongo abelii (Sumatran orangutan)).